Consider the following 292-residue polypeptide: Diaminopimelate epimerase (292 aa).

Positions 13, 46, and 66 each coordinate substrate. Cysteine 75 serves as the catalytic Proton donor. Substrate-binding positions include 76-77 (GN), asparagine 166, asparagine 199, and 217-218 (ER). Cysteine 226 serves as the catalytic Proton acceptor. Residue 227-228 (GT) participates in substrate binding.

The protein belongs to the diaminopimelate epimerase family. As to quaternary structure, homodimer.

It localises to the cytoplasm. It catalyses the reaction (2S,6S)-2,6-diaminopimelate = meso-2,6-diaminopimelate. The protein operates within amino-acid biosynthesis; L-lysine biosynthesis via DAP pathway; DL-2,6-diaminopimelate from LL-2,6-diaminopimelate: step 1/1. In terms of biological role, catalyzes the stereoinversion of LL-2,6-diaminopimelate (L,L-DAP) to meso-diaminopimelate (meso-DAP), a precursor of L-lysine and an essential component of the bacterial peptidoglycan. The polypeptide is Diaminopimelate epimerase (Ralstonia nicotianae (strain ATCC BAA-1114 / GMI1000) (Ralstonia solanacearum)).